The sequence spans 283 residues: Probable endonuclease 4 (283 aa).

Positions 69, 109, 145, 179, 182, 216, 229, 231, and 261 each coordinate Zn(2+).

This sequence belongs to the AP endonuclease 2 family. Zn(2+) serves as cofactor.

The enzyme catalyses Endonucleolytic cleavage to 5'-phosphooligonucleotide end-products.. Its function is as follows. Endonuclease IV plays a role in DNA repair. It cleaves phosphodiester bonds at apurinic or apyrimidinic (AP) sites, generating a 3'-hydroxyl group and a 5'-terminal sugar phosphate. This chain is Probable endonuclease 4, found in Desulfosudis oleivorans (strain DSM 6200 / JCM 39069 / Hxd3) (Desulfococcus oleovorans).